Here is a 377-residue protein sequence, read N- to C-terminus: Presenilin-associated rhomboid-like protein, mitochondrial (377 aa).

The transit peptide at 1 to 50 (MALYSWVQRGWRCGQTWAPLLGGGYRELSATQARQLLGRRFNLLLQQKCG) directs the protein to the mitochondrion. The Mitochondrial matrix segment spans residues 51 to 95 (FRKAPRKVEPRRSDTGSSGEAYKRSALIPPLEETVFYPSPYPVRT). 2 positions are modified to phosphoserine: Ser-63 and Ser-68. Residues 96–116 (LLKPFFFTVGFTGCAFGSAAI) form a helical membrane-spanning segment. The Mitochondrial intermembrane portion of the chain corresponds to 117-165 (WQYESLKSRVQSYFDGIKADWLDSIRPQKEGNLRKEINKWWNSLSDGQR). Residues 166 to 186 (TVTGIIAANALVFCLWRVPSL) form a helical membrane-spanning segment. Over 187–214 (HRTMIRYFTSNPASKVLCSPMLLSTFSH) the chain is Mitochondrial matrix. The helical transmembrane segment at 215–235 (FSLFHMAANMYVLWSFSTSIV) threads the bilayer. Residues 236–242 (NILGQEQ) are Mitochondrial intermembrane-facing. A helical membrane pass occupies residues 243 to 263 (FVAVYLSAGVISNFVSYVCKV). Topologically, residues 264-268 (ATGRY) are mitochondrial matrix. A helical membrane pass occupies residues 269 to 289 (GPSLGASGAIMTVLAAVCTKI). The active-site Nucleophile is the Ser-275. The Mitochondrial intermembrane segment spans residues 290-293 (PEGR). A helical transmembrane segment spans residues 294–314 (LAIIFLPVFTFTAGNALKAII). Topologically, residues 315-331 (AMDTAGMILGWKFFDHA) are mitochondrial matrix. The chain crosses the membrane as a helical span at residues 332–352 (AHLGGALFGIWYITYGHELIW). His-333 is an active-site residue. Residues 353–377 (KNREPLVKIWHEIRTNGPKKGGGSK) lie on the Mitochondrial intermembrane side of the membrane.

The protein belongs to the peptidase S54 family. Interacts with PSEN1 and PSEN2. Binds OPA1. In terms of processing, P-beta is proteolytically processed (beta-cleavage) in a PARL-dependent manner.

The protein localises to the mitochondrion inner membrane. Its subcellular location is the nucleus. The catalysed reaction is Cleaves type-1 transmembrane domains using a catalytic dyad composed of serine and histidine that are contributed by different transmembrane domains.. In terms of biological role, required for the control of apoptosis during postnatal growth. Essential for proteolytic processing of an antiapoptotic form of OPA1 which prevents the release of mitochondrial cytochrome c in response to intrinsic apoptotic signals. Required for the maturation of PINK1 into its 52kDa mature form after its cleavage by mitochondrial-processing peptidase (MPP). Promotes cleavage of serine/threonine-protein phosphatase PGAM5 in damaged mitochondria in response to loss of mitochondrial membrane potential. Mediates differential cleavage of PINK1 and PGAM5 depending on the health status of mitochondria, disassociating from PINK1 and associating with PGAM5 in response to mitochondrial membrane potential loss. Required for processing of CLPB into a form with higher protein disaggregase activity by removing an autoinhibitory N-terminal peptide. Promotes processing of DIABLO/SMAC in the mitochondrion which is required for DIABLO apoptotic activity. Also required for cleavage of STARD7 and TTC19. Promotes changes in mitochondria morphology regulated by phosphorylation of P-beta domain. This is Presenilin-associated rhomboid-like protein, mitochondrial from Rattus norvegicus (Rat).